The sequence spans 544 residues: MFS-type transporter prx5 (544 aa).

Positions 1 to 28 are disordered; the sequence is MAVDTEKDSVQAGSPMETPGSPVDETTE. Transmembrane regions (helical) follow at residues 36-56, 90-110, 116-136, 148-168, 178-198, 221-241, 249-269, 290-310, 330-350, 361-381, 387-407, 418-438, and 505-525; these read WIVSMILSCGYGLSFWPIPVV, LDHLCFLDLVCFIGHIVVASA, VIAGLVVSGFGGANCQMAAFA, IGVVIADLTVYIAVIIAPVTA, AWNFWGVAIFQGLSFFGLLFL, GAFLFIGGAVPFLMGIVWAGV, VVAPLVVGAAVLVCFALWESF, FTAPVIALGVVNMFYYSSSIL, VILSLPQGFAIFFGAMLLTCF, LTGSVFVMVVFGSLLGIVTPT, IAFIFLSQAGFGWALYLSIAI, GVSGGISGCIRFAAGAVATSI, and AIFVVAMVSMAFGILGLAACL.

It belongs to the major facilitator superfamily.

It is found in the cell membrane. Its function is as follows. MFS-type transporter; part of the gene cluster that mediates the biosynthesis of PR-toxin, a bicyclic sesquiterpene belonging to the eremophilane class and acting as a mycotoxin. The chain is MFS-type transporter prx5 from Penicillium rubens (strain ATCC 28089 / DSM 1075 / NRRL 1951 / Wisconsin 54-1255) (Penicillium chrysogenum).